The primary structure comprises 339 residues: 3-isopropylmalate dehydrogenase (339 aa).

Arg87, Arg97, Arg124, and Asp214 together coordinate substrate. Positions 214, 238, and 242 each coordinate Mg(2+). 274–286 contributes to the NAD(+) binding site; that stretch reads GSAPDIAGQGIAD.

Belongs to the isocitrate and isopropylmalate dehydrogenases family. LeuB type 2 subfamily. Homodimer. Requires Mg(2+) as cofactor. It depends on Mn(2+) as a cofactor.

It is found in the cytoplasm. It catalyses the reaction (2R,3S)-3-isopropylmalate + NAD(+) = 4-methyl-2-oxopentanoate + CO2 + NADH. Its pathway is amino-acid biosynthesis; L-leucine biosynthesis; L-leucine from 3-methyl-2-oxobutanoate: step 3/4. Functionally, catalyzes the oxidation of 3-carboxy-2-hydroxy-4-methylpentanoate (3-isopropylmalate) to 3-carboxy-4-methyl-2-oxopentanoate. The product decarboxylates to 4-methyl-2 oxopentanoate. The protein is 3-isopropylmalate dehydrogenase of Mycobacterium marinum (strain ATCC BAA-535 / M).